Consider the following 396-residue polypeptide: S-adenosylmethionine synthase (396 aa).

Histidine 16 is an ATP binding site. Aspartate 18 contacts Mg(2+). Residue glutamate 44 coordinates K(+). Positions 57 and 100 each coordinate L-methionine. The segment at 100–110 is flexible loop; it reads QSPDIAQGVDD. Residues 174 to 176, 241 to 242, aspartate 250, 256 to 257, alanine 273, and lysine 277 contribute to the ATP site; these read DAK, RF, and RK. Aspartate 250 contacts L-methionine. Position 281 (lysine 281) interacts with L-methionine.

Belongs to the AdoMet synthase family. In terms of assembly, homotetramer; dimer of dimers. It depends on Mg(2+) as a cofactor. K(+) serves as cofactor.

The protein resides in the cytoplasm. It carries out the reaction L-methionine + ATP + H2O = S-adenosyl-L-methionine + phosphate + diphosphate. Its pathway is amino-acid biosynthesis; S-adenosyl-L-methionine biosynthesis; S-adenosyl-L-methionine from L-methionine: step 1/1. Its function is as follows. Catalyzes the formation of S-adenosylmethionine (AdoMet) from methionine and ATP. The overall synthetic reaction is composed of two sequential steps, AdoMet formation and the subsequent tripolyphosphate hydrolysis which occurs prior to release of AdoMet from the enzyme. The sequence is that of S-adenosylmethionine synthase from Pediococcus pentosaceus (strain ATCC 25745 / CCUG 21536 / LMG 10740 / 183-1w).